The sequence spans 949 residues: MNLGDGLKLETELLDGKTKLILSPYEHKSKISVKMGNKAKIAKCPLRTKTGHILKSTQDTCIGSEKLLQKKTVGSETSQAKGEKNGMTFSSTKDLCKQCIDKDCLHIQKEISPATPNMQKTRNTVNTSLVGKQKPHKKHITAENMKSNLVCLTQEQLQQILMTVNQGNRSLSLTENGKEAKSQYSLHLNSISNQPKDENIMGLFKKTEMVSSVPAENKSVLNEHQETSKQCEQKIAIENEWKPADIFSTLGERERDRSLLEAKKAQWRKELDEQVALKKKEKEVSEKWNDPWKKSESDKIIWEKHQILDQSRETVLLEHAFSAVKQELQRKWIEELNKQIEDDRQRKIEEKIIYSKGEEHDRWAMHFDSLKSYPGSQSQLSSRSTHKQPEYFCVSPDTQELADVSSVCTPTTGSQVEPSEEEHIAKPIKDVVMANSKKTNFLRSMTALLDPAQIEERDRRRQKQLEHQKAITAQVEEKCRKKQLEEEQRKKEEQEEELRLAQEREEMQKQYEEDILKQKQKEEIMTLKTNELFQTMQRAQELAQRLKQEQRIRELAQKGHDTSRLIKNLGVDTIQIEYNASNISNSRHDSDEVSGKMNTYMNSTTSPKKDTGVQTDDLNIGIFTNAESHCGSLMERDITNCSSPEISAELIGQFSTKKNKQELTQDKGASLEKENNRCNDQCNQFTRIDKQTKHMKKYPKRPDWNINKPPKRYIPASEKYPKQLQKQREEKEVRRQMELLHLVEKNNPGHLSQNRGISPEIFHSSHQETESKFRWHLVKKEEEPLNIHSFSKERSPSSPVPAVKNRTQQTQNTLHLPLKNSSYERENLISGGNQTELSSGISESSHFIPYVRTNEIYYLDPDAPLSGPSTQDPQYQNSQDCGQERQLFDSDCVRDPLLNPNMVKNRDRQQAILKGLSELRQGLLQKQKELESSLLPLAENQEENFGSSF.

A phosphothreonine mark is found at T115 and T121. A Phosphoserine modification is found at S369. Residues 474 to 558 (QVEEKCRKKQ…EQRIRELAQK (85 aa)) adopt a coiled-coil conformation. The tract at residues 570–949 (GVDTIQIEYN…NQEENFGSSF (380 aa)) is mediates localization to cilia, centrosomes and spindle microtubules and the interaction with PCM1, CEP290, CEP104 and CSPP1. S606 carries the post-translational modification Phosphoserine. Disordered regions lie at residues 691–714 (QTKH…KRYI) and 789–809 (SFSK…RTQQ).

As to quaternary structure, homodimer; disulfide-linked. Interacts with CEP290. Interacts with PCM1. Interacts with ARMC9, TOGARAM1, CSPP1 and CEP104. Interacts with CDK5RAP2, CEP152, CEP192, TBG1 and PRC1.

Its subcellular location is the cytoplasm. It is found in the cytoskeleton. The protein resides in the microtubule organizing center. It localises to the centrosome. The protein localises to the centriolar satellite. Its subcellular location is the cell projection. It is found in the cilium. The protein resides in the cilium basal body. It localises to the cilium axoneme. The protein localises to the photoreceptor inner segment. Its subcellular location is the photoreceptor outer segment. Functionally, microtubule-binding protein required for ciliogenesis. May function in ciliogenesis by mediating the transport of proteins like BBS4 to the cilium, but also through the organization of the centriolar satellites. Required for the assembly of signaling-competent cilia with proper structure and length. Mediates this function in part by regulating transition zone assembly and basal body recruitment of the IFT-B complex. Cooperates with the ciliopathy proteins CSPP1 and CEP104 during cilium length regulation. Plays two important roles during cell division. First, is required for mitotic progression via regulation of spindle assembly, organization and orientation, levels of spindle microtubules (MTs), kinetochore-fiber integrity, and chromosome alignment. Second, functions during cytokinesis in part by regulating assembly and organization of central spindle and midbody MTs Plays a role in retina morphogenesis and/or homeostasis. The chain is Coiled-coil domain-containing protein 66 from Pongo abelii (Sumatran orangutan).